The following is a 436-amino-acid chain: UDP-N-acetylmuramate--L-alanine ligase (436 aa).

Residue 111 to 117 (GTHGKTS) coordinates ATP.

The protein belongs to the MurCDEF family.

It localises to the cytoplasm. It catalyses the reaction UDP-N-acetyl-alpha-D-muramate + L-alanine + ATP = UDP-N-acetyl-alpha-D-muramoyl-L-alanine + ADP + phosphate + H(+). It functions in the pathway cell wall biogenesis; peptidoglycan biosynthesis. In terms of biological role, cell wall formation. This chain is UDP-N-acetylmuramate--L-alanine ligase, found in Lactiplantibacillus plantarum (strain ATCC BAA-793 / NCIMB 8826 / WCFS1) (Lactobacillus plantarum).